Consider the following 241-residue polypeptide: Ribosomal RNA small subunit methyltransferase G (241 aa).

Residues Gly-79, Phe-84, 130–131 (AE), and Arg-150 contribute to the S-adenosyl-L-methionine site.

The protein belongs to the methyltransferase superfamily. RNA methyltransferase RsmG family.

Its subcellular location is the cytoplasm. Functionally, specifically methylates the N7 position of a guanine in 16S rRNA. In Limosilactobacillus reuteri (strain DSM 20016) (Lactobacillus reuteri), this protein is Ribosomal RNA small subunit methyltransferase G.